Consider the following 322-residue polypeptide: Mas-related G-protein coupled receptor member X3 (322 aa).

Topologically, residues M1–T31 are extracellular. Residues G32–L52 traverse the membrane as a helical segment. At G53–A60 the chain is on the cytoplasmic side. The chain crosses the membrane as a helical span at residues V61 to I81. Residues C82–K96 are Extracellular-facing. The helical transmembrane segment at I97–S117 threads the bilayer. The Cytoplasmic segment spans residues T118–S140. Residues V141–C161 traverse the membrane as a helical segment. Topologically, residues D162 to D177 are extracellular. The helical transmembrane segment at F178–L198 threads the bilayer. Topologically, residues L199–R213 are cytoplasmic. Residues L214–I234 form a helical membrane-spanning segment. Topologically, residues Q235–H254 are extracellular. A helical membrane pass occupies residues L255–V275. Residues G276 to Q322 lie on the Cytoplasmic side of the membrane.

Belongs to the G-protein coupled receptor 1 family. Mas subfamily. As to expression, uniquely localized in a subset of small dorsal root and trigeminal sensory neurons.

Its subcellular location is the cell membrane. In terms of biological role, orphan receptor. Probably involved in the function of nociceptive neurons. May regulate nociceptor function and/or development, including the sensation or modulation of pain. Potently activated by enkephalins. The polypeptide is Mas-related G-protein coupled receptor member X3 (MRGPRX3) (Homo sapiens (Human)).